Consider the following 276-residue polypeptide: Acyl-[acyl-carrier-protein]--UDP-N-acetylglucosamine O-acyltransferase (276 aa).

The protein belongs to the transferase hexapeptide repeat family. LpxA subfamily. As to quaternary structure, homotrimer.

Its subcellular location is the cytoplasm. It catalyses the reaction a (3R)-hydroxyacyl-[ACP] + UDP-N-acetyl-alpha-D-glucosamine = a UDP-3-O-[(3R)-3-hydroxyacyl]-N-acetyl-alpha-D-glucosamine + holo-[ACP]. It participates in glycolipid biosynthesis; lipid IV(A) biosynthesis; lipid IV(A) from (3R)-3-hydroxytetradecanoyl-[acyl-carrier-protein] and UDP-N-acetyl-alpha-D-glucosamine: step 1/6. Involved in the biosynthesis of lipid A, a phosphorylated glycolipid that anchors the lipopolysaccharide to the outer membrane of the cell. The sequence is that of Acyl-[acyl-carrier-protein]--UDP-N-acetylglucosamine O-acyltransferase from Synechocystis sp. (strain ATCC 27184 / PCC 6803 / Kazusa).